A 213-amino-acid chain; its full sequence is Peptidyl-tRNA hydrolase (213 aa).

Tyr15 contacts tRNA. His20 serves as the catalytic Proton acceptor. The tRNA site is built by Tyr66, Asn68, and Asn114. Residues Met186 to Ala213 form a disordered region. The span at Pro196–Ala213 shows a compositional bias: pro residues.

The protein belongs to the PTH family. Monomer.

It localises to the cytoplasm. The catalysed reaction is an N-acyl-L-alpha-aminoacyl-tRNA + H2O = an N-acyl-L-amino acid + a tRNA + H(+). In terms of biological role, hydrolyzes ribosome-free peptidyl-tRNAs (with 1 or more amino acids incorporated), which drop off the ribosome during protein synthesis, or as a result of ribosome stalling. Functionally, catalyzes the release of premature peptidyl moieties from peptidyl-tRNA molecules trapped in stalled 50S ribosomal subunits, and thus maintains levels of free tRNAs and 50S ribosomes. This is Peptidyl-tRNA hydrolase from Leptothrix cholodnii (strain ATCC 51168 / LMG 8142 / SP-6) (Leptothrix discophora (strain SP-6)).